The primary structure comprises 166 residues: Stress response protein NhaX (166 aa).

Belongs to the universal stress protein A family.

In Bacillus subtilis (strain 168), this protein is Stress response protein NhaX (nhaX).